The primary structure comprises 297 residues: Aspartate carbamoyltransferase catalytic subunit (297 aa).

Residues Arg49 and Thr50 each contribute to the carbamoyl phosphate site. L-aspartate is bound at residue Lys77. Positions 99, 129, and 132 each coordinate carbamoyl phosphate. L-aspartate is bound by residues Arg162 and Arg215. Carbamoyl phosphate-binding residues include Gly256 and Pro257.

The protein belongs to the aspartate/ornithine carbamoyltransferase superfamily. ATCase family. Heterododecamer (2C3:3R2) of six catalytic PyrB chains organized as two trimers (C3), and six regulatory PyrI chains organized as three dimers (R2).

It catalyses the reaction carbamoyl phosphate + L-aspartate = N-carbamoyl-L-aspartate + phosphate + H(+). It functions in the pathway pyrimidine metabolism; UMP biosynthesis via de novo pathway; (S)-dihydroorotate from bicarbonate: step 2/3. Functionally, catalyzes the condensation of carbamoyl phosphate and aspartate to form carbamoyl aspartate and inorganic phosphate, the committed step in the de novo pyrimidine nucleotide biosynthesis pathway. In Legionella pneumophila subsp. pneumophila (strain Philadelphia 1 / ATCC 33152 / DSM 7513), this protein is Aspartate carbamoyltransferase catalytic subunit.